The primary structure comprises 167 residues: SsrA-binding protein (167 aa).

The disordered stretch occupies residues Q139 to A167. Basic and acidic residues predominate over residues R144–R158.

The protein belongs to the SmpB family.

It localises to the cytoplasm. Its function is as follows. Required for rescue of stalled ribosomes mediated by trans-translation. Binds to transfer-messenger RNA (tmRNA), required for stable association of tmRNA with ribosomes. tmRNA and SmpB together mimic tRNA shape, replacing the anticodon stem-loop with SmpB. tmRNA is encoded by the ssrA gene; the 2 termini fold to resemble tRNA(Ala) and it encodes a 'tag peptide', a short internal open reading frame. During trans-translation Ala-aminoacylated tmRNA acts like a tRNA, entering the A-site of stalled ribosomes, displacing the stalled mRNA. The ribosome then switches to translate the ORF on the tmRNA; the nascent peptide is terminated with the 'tag peptide' encoded by the tmRNA and targeted for degradation. The ribosome is freed to recommence translation, which seems to be the essential function of trans-translation. The protein is SsrA-binding protein of Xylella fastidiosa (strain M12).